Reading from the N-terminus, the 60-residue chain is Prophage outer membrane lipoprotein RzoD (60 aa).

The signal sequence occupies residues 1-19; it reads MRKLKMMLCVMMLPLVVVG. Residue cysteine 20 is the site of N-palmitoyl cysteine attachment. A lipid anchor (S-diacylglycerol cysteine) is attached at cysteine 20.

It belongs to the lambdalikevirus o-spanin family. As to quaternary structure, homodimer; disulfide-linked. Interacts (via C-terminus) with RZ (via C-terminus). Part of the spanin complex which spans the entire periplasmic space. The spanin complex is composed of spanin, inner membrane subunit and spanin, outer membrane subunit.

The protein resides in the cell outer membrane. Its function is as follows. Component of the spanin complex that disrupts the outer membrane and causes cell lysis during virus exit. The spanin complex conducts the final step in cell lysis by disrupting the outer membrane after holin and endolysin action have permeabilized the inner membrane and degraded the host peptidoglycans. The polypeptide is Prophage outer membrane lipoprotein RzoD (rzoD) (Escherichia coli (strain K12)).